The following is a 671-amino-acid chain: TBC1 domain family member 15 (671 aa).

The residue at position 2 (alanine 2) is an N-acetylalanine. Serine 23, serine 32, serine 70, serine 205, and serine 257 each carry phosphoserine. The region spanning 329–539 (GLSHSLRKQA…RLWEVMWTEL (211 aa)) is the Rab-GAP TBC domain. Phosphoserine is present on residues serine 623 and serine 655. The tract at residues 650–671 (EAKDDSPTQTLASPNACRLTPA) is disordered. Residue threonine 669 is modified to Phosphothreonine.

As to quaternary structure, interacts with non-phosphorylated form of RAB8A; phosphorylation of RAB8A at 'Thr-72' disrupts this interaction. Interacts with ARMC12. Ubiquitous, with highest expression in heart, liver and testis and lower expression in brain, spleen, lung, kidney and skeletal muscle.

The protein resides in the cytoplasm. Functionally, acts as a GTPase activating protein for RAB7A. Does not act on RAB4, RAB5 or RAB6. This Mus musculus (Mouse) protein is TBC1 domain family member 15 (Tbc1d15).